The sequence spans 455 residues: Nuclear distribution protein nudF (455 aa).

A LisH domain is found at 9–41; sequence QAEELHKSMIAYLVASDLPDTAAALRREVNLSE. A coiled-coil region spans residues 61 to 88; that stretch reads TSIARLQKKIMDLESRNATLQSELDNST. WD repeat units lie at residues 113–154, 156–196, 200–239, 242–281, 287–347, 349–388, 392–438, and 440–455; these read SHRD…RTLK, HTRA…KNIR, GHDH…CVKT, GHTD…NIEH, GHEN…LMTL, GHDS…KCVK, AHES…IQMR, and VVAT…IFAG. The disordered stretch occupies residues 408–431; it reads KNVPGGDGAAEGEGNDKNGAGSEN.

Belongs to the WD repeat LIS1/nudF family. In terms of assembly, self-associates. Interacts with nudE and dynein.

The protein resides in the cytoplasm. The protein localises to the cytoskeleton. It is found in the spindle pole. In terms of biological role, positively regulates the activity of the minus-end directed microtubule motor protein dynein. May enhance dynein-mediated microtubule sliding by targeting dynein to the microtubule plus end. Required for nuclear migration during vegetative growth as well as development. Required for retrograde early endosome (EE) transport from the hyphal tip. Required for localization of dynein to the mitotic spindle poles. Recruits additional proteins to the dynein complex at SPBs. The polypeptide is Nuclear distribution protein nudF (Aspergillus flavus (strain ATCC 200026 / FGSC A1120 / IAM 13836 / NRRL 3357 / JCM 12722 / SRRC 167)).